Here is a 63-residue protein sequence, read N- to C-terminus: Prokaryotic ubiquitin-like protein UBact (63 aa).

The segment at 1 to 63 (MSGRSTFGRF…SRRYRQRTGE (63 aa)) is disordered. Basic and acidic residues predominate over residues 17–50 (PWERKPGDDEGGPKRPKVERPDTNDLLKRMRRVD). Residue Glu-63 forms an Isoglutamyl lysine isopeptide (Glu-Lys) (interchain with K-? in acceptor proteins) linkage.

It belongs to the ubiquitin-like protein UBact family.

In terms of biological role, may function as a protein modifier covalently attached to lysine residues of substrate proteins. This may serve to target the modified proteins for degradation by proteasomes. The protein is Prokaryotic ubiquitin-like protein UBact of Handelsmanbacteria sp. (strain RIFCSPLOWO2_12_FULL_64_10).